The chain runs to 426 residues: Pannexin-1 (426 aa).

Topologically, residues 1 to 40 (MAIAQLATEYVFSDFLLKEPTEPKFKGLRLELAVDKMVTC) are cytoplasmic. C40 is modified (S-nitrosocysteine). Residues 41–61 (IAVGLPLLLISLAFAQEISIG) traverse the membrane as a helical segment. The Extracellular segment spans residues 62 to 106 (TQISCFSPSSFSWRQAAFVDSYCWAAVQQKNSLQSESGNLPLWLH). Intrachain disulfides connect C66-C265 and C84-C246. The helical transmembrane segment at 107–127 (KFFPYILLLFAILLYLPPLFW) threads the bilayer. Over 128 to 217 (RFAAAPHICS…NLIIKYISCR (90 aa)) the chain is Cytoplasmic. At Y199 the chain carries Phosphotyrosine. A helical membrane pass occupies residues 218–238 (LLTLIIILLACIYLGYYFSLS). At 239 to 266 (SLSDEFVCSIKSGILRNDSTVPDQFQCK) the chain is on the extracellular side. The N-linked (GlcNAc...) asparagine glycan is linked to N255. Residues 267–287 (LIAVGIFQLLSVINLVVYVLL) form a helical membrane-spanning segment. The Cytoplasmic portion of the chain corresponds to 288 to 426 (APVVVYTLFV…ARQRLLDSSC (139 aa)). C347 is modified (S-nitrosocysteine). Over residues 405 to 414 (DSETKANNGE) the composition is skewed to polar residues. The disordered stretch occupies residues 405–426 (DSETKANNGEKNARQRLLDSSC). Residues 415-426 (KNARQRLLDSSC) show a composition bias toward basic and acidic residues.

It belongs to the pannexin family. In terms of assembly, homoheptameric. In terms of processing, S-nitrosylation inhibits channel currents and ATP release. Post-translationally, N-glycosylation plays a role in cell surface targeting. Glycosylation at its extracellular surface makes unlikely that two oligomers could dock to form an intercellular channel such as in gap junctions. Exists in three glycosylation states: non-glycosylated (GLY0), high-mannose glycosylated (GLY1), and fully mature glycosylated (GLY2). Cleaved by CASP3 and CASP7 during apoptosis. Cleavage opens the channel for the release of metabolites and induces plasma membrane permeability during apoptosis. In terms of processing, phosphorylated at Tyr-199 by SRC. Phosphorylation activates ATP release. Constitutively phosphorylated in vascular smooth muscle cells. As to expression, widely expressed. Highest expression is observed in oocytes and brain. Detected at very low levels in sperm cells.

It is found in the cell membrane. The protein localises to the endoplasmic reticulum membrane. It catalyses the reaction chloride(in) = chloride(out). The catalysed reaction is iodide(out) = iodide(in). The enzyme catalyses ATP(in) = ATP(out). It carries out the reaction K(+)(in) = K(+)(out). It catalyses the reaction Ca(2+)(in) = Ca(2+)(out). The catalysed reaction is Na(+)(in) = Na(+)(out). The enzyme catalyses nitrate(in) = nitrate(out). It carries out the reaction L-aspartate(out) = L-aspartate(in). It catalyses the reaction L-glutamate(out) = L-glutamate(in). The catalysed reaction is D-gluconate(in) = D-gluconate(out). The enzyme catalyses spermidine(in) = spermidine(out). Ion channel involved in a variety of physiological functions such as blood pressure regulation, apoptotic cell clearance and oogenesis. Forms anion-selective channels with relatively low conductance and an order of permeabilities: nitrate&gt;iodide&gt;chlroride&gt;&gt;aspartate=glutamate=gluconate. Can release ATP upon activation through phosphorylation or cleavage at C-terminus. May play a role as a Ca(2+)-leak channel to regulate ER Ca(2+) homeostasis. Functionally, during apoptosis, the C terminal tail is cleaved by caspases, which opens the main pore acting as a large-pore ATP efflux channel with a broad distribution, which allows the regulated release of molecules and ions smaller than 1 kDa, such as nucleotides ATP and UTP, and selective plasma membrane permeability to attract phagocytes that engulf the dying cells. This chain is Pannexin-1, found in Homo sapiens (Human).